Here is a 191-residue protein sequence, read N- to C-terminus: Large ribosomal subunit protein bL9 (191 aa).

Residues 171–191 (EDALKPEDFFNPEAELESEEE) are disordered.

It belongs to the bacterial ribosomal protein bL9 family.

Its function is as follows. Binds to the 23S rRNA. In Rhizobium meliloti (strain 1021) (Ensifer meliloti), this protein is Large ribosomal subunit protein bL9.